Consider the following 412-residue polypeptide: DnaJ homolog subfamily A member 2 (412 aa).

The J domain maps to 8 to 70 (KLYDILGVPP…EKRELYDRYG (63 aa)). At K39 the chain carries N6-acetyllysine. Residues S78 and S123 each carry the phosphoserine modification. The segment at 130-214 (GKTTKLQLSK…CEGKKVIKEV (85 aa)) adopts a CR-type zinc-finger fold. A Glycyl lysine isopeptide (Lys-Gly) (interchain with G-Cter in SUMO2) cross-link involves residue K134. C143 and C146 together coordinate Zn(2+). A CXXCXGXG motif repeat occupies 143-150 (CSACSGQG). Position 152 is an N6-acetyllysine (K152). Zn(2+) is bound by residues C159, C162, C186, C189, C202, and C205. CXXCXGXG motif repeat units follow at residues 159 to 166 (CSACRGRG), 186 to 193 (CSDCNGEG), and 202 to 209 (CKKCEGKK). The interval 365 to 412 (IGETEEVELQEFDSTRGSGGGQRREAYNDSSDEESSSHHGPGVQCAHQ) is disordered. A Phosphotyrosine modification is found at Y391. Phosphoserine is present on residues S394 and S395. A Cysteine methyl ester modification is found at C409. C409 carries S-farnesyl cysteine lipidation. A propeptide spans 410 to 412 (AHQ) (removed in mature form).

It is found in the membrane. Functionally, co-chaperone of Hsc70. Stimulates ATP hydrolysis and the folding of unfolded proteins mediated by HSPA1A/B (in vitro). The protein is DnaJ homolog subfamily A member 2 (Dnaja2) of Rattus norvegicus (Rat).